The following is a 270-amino-acid chain: Glutamate racemase (270 aa).

Substrate is bound by residues 7–8 (DS) and 39–40 (YG). Residue Cys70 is the Proton donor/acceptor of the active site. 71–72 (NT) is a binding site for substrate. Cys194 functions as the Proton donor/acceptor in the catalytic mechanism. 195–196 (TH) provides a ligand contact to substrate.

It belongs to the aspartate/glutamate racemases family.

It catalyses the reaction L-glutamate = D-glutamate. Its pathway is cell wall biogenesis; peptidoglycan biosynthesis. Provides the (R)-glutamate required for cell wall biosynthesis. In Cereibacter sphaeroides (strain ATCC 17023 / DSM 158 / JCM 6121 / CCUG 31486 / LMG 2827 / NBRC 12203 / NCIMB 8253 / ATH 2.4.1.) (Rhodobacter sphaeroides), this protein is Glutamate racemase.